Here is a 213-residue protein sequence, read N- to C-terminus: Orotate phosphoribosyltransferase (213 aa).

Position 26 (Lys26) interacts with 5-phospho-alpha-D-ribose 1-diphosphate. Position 34 to 35 (34 to 35 (FF)) interacts with orotate. 5-phospho-alpha-D-ribose 1-diphosphate contacts are provided by residues 72–73 (YK), Arg98, Lys99, Lys102, His104, and 123–131 (DDVISAGTS). Residues Ser127 and Arg155 each coordinate orotate.

It belongs to the purine/pyrimidine phosphoribosyltransferase family. PyrE subfamily. In terms of assembly, homodimer. Mg(2+) is required as a cofactor.

It carries out the reaction orotidine 5'-phosphate + diphosphate = orotate + 5-phospho-alpha-D-ribose 1-diphosphate. It participates in pyrimidine metabolism; UMP biosynthesis via de novo pathway; UMP from orotate: step 1/2. Its function is as follows. Catalyzes the transfer of a ribosyl phosphate group from 5-phosphoribose 1-diphosphate to orotate, leading to the formation of orotidine monophosphate (OMP). In Laribacter hongkongensis (strain HLHK9), this protein is Orotate phosphoribosyltransferase.